The sequence spans 344 residues: Fructose-1,6-bisphosphatase, cytosolic (344 aa).

Mg(2+) is bound by residues E71, E100, D121, L123, and D124. Substrate contacts are provided by residues 124–127 (DGSS), N215, Y247, Y267, and K277. E283 is a Mg(2+) binding site.

Belongs to the FBPase class 1 family. It depends on Mg(2+) as a cofactor.

The protein resides in the cytoplasm. The catalysed reaction is beta-D-fructose 1,6-bisphosphate + H2O = beta-D-fructose 6-phosphate + phosphate. This Oryza coarctata (Wild rice) protein is Fructose-1,6-bisphosphatase, cytosolic.